Reading from the N-terminus, the 74-residue chain is Mitochondrial import receptor subunit TOM6 homolog (74 aa).

Low complexity predominate over residues 1 to 20; the sequence is MASSGVTVSAAGSASEASEV. The interval 1 to 21 is disordered; that stretch reads MASSGVTVSAAGSASEASEVP. Residue Ala-2 is modified to N-acetylalanine.

It belongs to the Tom6 family. Forms part of the preprotein translocase complex of the outer mitochondrial membrane (TOM complex) which consists of at least 7 different proteins (TOMM5, TOMM6, TOMM7, TOMM20, TOMM22, TOMM40 and TOMM70).

It is found in the mitochondrion outer membrane. The polypeptide is Mitochondrial import receptor subunit TOM6 homolog (Tomm6) (Mus musculus (Mouse)).